The primary structure comprises 82 residues: MDNVADRVKKVVVEQLGVNEDEVTNEASFVDDLGADSLDTVELVMALEEEFDCEIPDEEAEKIATVQQAIDYVSAHIPAKDA.

The 76-residue stretch at 2–77 (DNVADRVKKV…QAIDYVSAHI (76 aa)) folds into the Carrier domain. Position 37 is an O-(pantetheine 4'-phosphoryl)serine (Ser-37).

Belongs to the acyl carrier protein (ACP) family. 4'-phosphopantetheine is transferred from CoA to a specific serine of apo-ACP by AcpS. This modification is essential for activity because fatty acids are bound in thioester linkage to the sulfhydryl of the prosthetic group.

The protein localises to the cytoplasm. Its pathway is lipid metabolism; fatty acid biosynthesis. In terms of biological role, carrier of the growing fatty acid chain in fatty acid biosynthesis. The sequence is that of Acyl carrier protein from Acidithiobacillus ferrooxidans (strain ATCC 23270 / DSM 14882 / CIP 104768 / NCIMB 8455) (Ferrobacillus ferrooxidans (strain ATCC 23270)).